Consider the following 131-residue polypeptide: Small ribosomal subunit protein uS8 (131 aa).

This sequence belongs to the universal ribosomal protein uS8 family. In terms of assembly, part of the 30S ribosomal subunit. Contacts proteins S5 and S12.

In terms of biological role, one of the primary rRNA binding proteins, it binds directly to 16S rRNA central domain where it helps coordinate assembly of the platform of the 30S subunit. The sequence is that of Small ribosomal subunit protein uS8 from Acinetobacter baumannii (strain AB307-0294).